The sequence spans 354 residues: Histidinol-phosphate aminotransferase 1 (354 aa).

N6-(pyridoxal phosphate)lysine is present on Lys209.

The protein belongs to the class-II pyridoxal-phosphate-dependent aminotransferase family. Histidinol-phosphate aminotransferase subfamily. Homodimer. Pyridoxal 5'-phosphate is required as a cofactor.

The catalysed reaction is L-histidinol phosphate + 2-oxoglutarate = 3-(imidazol-4-yl)-2-oxopropyl phosphate + L-glutamate. The protein operates within amino-acid biosynthesis; L-histidine biosynthesis; L-histidine from 5-phospho-alpha-D-ribose 1-diphosphate: step 7/9. The polypeptide is Histidinol-phosphate aminotransferase 1 (hisC1) (Oceanobacillus iheyensis (strain DSM 14371 / CIP 107618 / JCM 11309 / KCTC 3954 / HTE831)).